A 543-amino-acid polypeptide reads, in one-letter code: Allantoate permease (543 aa).

The Cytoplasmic portion of the chain corresponds to 1–80 (MSADASTNSN…PEEDRKLRWK (80 aa)). The chain crosses the membrane as a helical span at residues 81–97 (IDYCMFPLMCILYAVQF). Residues 98–123 (MDKISTSSAAVMGLRTDLKMHGDQYS) are Extracellular-facing. A helical membrane pass occupies residues 124–145 (WVTSAFYFGYLFMNLGPVQFIF). The Cytoplasmic segment spans residues 146–154 (QRTSHMSKM). Residues 155–171 (LAVFIVIWGMLLALHAA) form a helical membrane-spanning segment. At 172 to 178 (PTVKYPS) the chain is on the extracellular side. Residues 179 to 200 (FIVLRVLLGCAESVVTPCFTII) traverse the membrane as a helical segment. The Cytoplasmic segment spans residues 201 to 213 (TAQYWKTEEQFTR). Residues 214-237 (VSIWFGMNGLGSILINAIAYGVYI) traverse the membrane as a helical segment. Topologically, residues 238–248 (HQDSYAIKGWR) are extracellular. A helical transmembrane segment spans residues 249–269 (TLFVITGVITIFIGILIFLWI). The Cytoplasmic portion of the chain corresponds to 270-317 (PDDPSKARFLSKREKLMVVQRIRSNQQGFGNHEIKKYQIIEALKDVRT). The chain crosses the membrane as a helical span at residues 318–342 (WLYFLFTVSSNIPNGGISSFMSILL). The Extracellular portion of the chain corresponds to 343-352 (NSDFGYSSKE). The chain crosses the membrane as a helical span at residues 353-377 (TLLMGLPTGAVELVGCPLFGILAVY). Residues 378–389 (AANKKIPFWKYK) are Cytoplasmic-facing. A helical membrane pass occupies residues 390-411 (LSWAIFAAVLALIASCMLGFAT). The Extracellular segment spans residues 412-417 (NSKKAR). The helical transmembrane segment at 418 to 435 (LAGAYLWYISPVSFICVL) threads the bilayer. At 436 to 453 (SNISANSSGYSKKWTVSS) the chain is on the cytoplasmic side. Residues 454–472 (INLVAYAAANLAGPQTFIA) traverse the membrane as a helical segment. At 473 to 482 (KQAPKYHGAK) the chain is on the extracellular side. A helical membrane pass occupies residues 483–504 (VAMVVCYAVMIVLLSILLIVNL). Topologically, residues 505–543 (RENKRRDKIAAERGFPEETENLEFSDLTDFENPNFRYTL) are cytoplasmic.

It belongs to the major facilitator superfamily. Allantoate permease family.

Its subcellular location is the membrane. Functionally, component of the allantoate transport system. The chain is Allantoate permease (DAL5) from Saccharomyces cerevisiae (strain ATCC 204508 / S288c) (Baker's yeast).